Consider the following 283-residue polypeptide: Tumor necrosis factor receptor superfamily member 14 (283 aa).

Residues 1 to 38 (MEPPGDWGPPPWRSTPKTDVLRLVLYLTFLGAPCYAPA) form the signal peptide. Topologically, residues 39–202 (LPSCKEDEYP…GAGTSSSHWV (164 aa)) are extracellular. 8 cysteine pairs are disulfide-bonded: Cys42–Cys53, Cys54–Cys67, Cys57–Cys75, Cys78–Cys93, Cys96–Cys111, Cys99–Cys119, Cys121–Cys138, and Cys127–Cys135. TNFR-Cys repeat units follow at residues 42-75 (CKEDEYPVGSECCPKCSPGYRVKEACGELTGTVC), 78-119 (CPPG…NAVC), and 121-162 (CSPG…DTLC). A glycan (N-linked (GlcNAc...) asparagine) is linked at Asn110. An N-linked (GlcNAc...) asparagine glycan is attached at Asn173. The chain crosses the membrane as a helical span at residues 203 to 223 (WWFLSGSLVIVIVCSTVGLII). Over 224–283 (CVKRRKPRGDVVKVIVSVQRKRQEAEGEATVIEALQAPPDVTTVAVEETIPSFTGRSPNH) the chain is Cytoplasmic. Ser240 bears the Phosphoserine mark.

The protein belongs to the tumor necrosis factor receptor superfamily. Interacts with TRAF2, TRAF3 and TRAF5. Interacts (via CRD1/TNFR-Cys 1) with CD160; this interaction is direct. Interacts with LTA and TNFSF14. Interacts (via CRD1/TNFR-Cys 1) in cis and trans with BTLA; the cis interactions inhibits the trans interactions. In terms of assembly, (Microbial infection) Interacts with herpes simplex virus 1/HHV-1 envelope glycoprotein D. As to quaternary structure, (Microbial infection) Interacts with herpes simplex virus 2/HHV-2 envelope glycoprotein D. In terms of processing, N-glycosylated. Widely expressed, with the highest expression in lung, spleen and thymus. Expressed in a subpopulation of B cells and monocytes. Expressed in naive T cells.

The protein localises to the cell membrane. Functionally, receptor for four distinct ligands: The TNF superfamily members TNFSF14/LIGHT and homotrimeric LTA/lymphotoxin-alpha and the immunoglobulin superfamily members BTLA and CD160, altogether defining a complex stimulatory and inhibitory signaling network. Signals via the TRAF2-TRAF3 E3 ligase pathway to promote immune cell survival and differentiation. Participates in bidirectional cell-cell contact signaling between antigen presenting cells and lymphocytes. In response to ligation of TNFSF14/LIGHT, delivers costimulatory signals to T cells, promoting cell proliferation and effector functions. Interacts with CD160 on NK cells, enhancing IFNG production and anti-tumor immune response. In the context of bacterial infection, acts as a signaling receptor on epithelial cells for CD160 from intraepithelial lymphocytes, triggering the production of antimicrobial proteins and pro-inflammatory cytokines. Upon binding to CD160 on activated CD4+ T cells, down-regulates CD28 costimulatory signaling, restricting memory and alloantigen-specific immune response. May interact in cis (on the same cell) or in trans (on other cells) with BTLA. In cis interactions, appears to play an immune regulatory role inhibiting in trans interactions in naive T cells to maintain a resting state. In trans interactions, can predominate during adaptive immune response to provide survival signals to effector T cells. In terms of biological role, (Microbial infection) Acts as a receptor for Herpes simplex virus 1/HHV-1. Its function is as follows. (Microbial infection) Acts as a receptor for Herpes simplex virus 2/HHV-2. The sequence is that of Tumor necrosis factor receptor superfamily member 14 from Homo sapiens (Human).